A 145-amino-acid chain; its full sequence is Large ribosomal subunit protein uL11 (145 aa).

This sequence belongs to the universal ribosomal protein uL11 family. Part of the ribosomal stalk of the 50S ribosomal subunit. Interacts with L10 and the large rRNA to form the base of the stalk. L10 forms an elongated spine to which L12 dimers bind in a sequential fashion forming a multimeric L10(L12)X complex. Post-translationally, one or more lysine residues are methylated.

In terms of biological role, forms part of the ribosomal stalk which helps the ribosome interact with GTP-bound translation factors. This Hydrogenobaculum sp. (strain Y04AAS1) protein is Large ribosomal subunit protein uL11.